A 124-amino-acid chain; its full sequence is Small ribosomal subunit protein uS12 (124 aa).

Position 89 is a 3-methylthioaspartic acid (aspartate 89).

The protein belongs to the universal ribosomal protein uS12 family. In terms of assembly, part of the 30S ribosomal subunit. Contacts proteins S8 and S17. May interact with IF1 in the 30S initiation complex.

With S4 and S5 plays an important role in translational accuracy. Functionally, interacts with and stabilizes bases of the 16S rRNA that are involved in tRNA selection in the A site and with the mRNA backbone. Located at the interface of the 30S and 50S subunits, it traverses the body of the 30S subunit contacting proteins on the other side and probably holding the rRNA structure together. The combined cluster of proteins S8, S12 and S17 appears to hold together the shoulder and platform of the 30S subunit. The chain is Small ribosomal subunit protein uS12 from Psychrobacter arcticus (strain DSM 17307 / VKM B-2377 / 273-4).